Here is a 294-residue protein sequence, read N- to C-terminus: Deubiquitinase OTUD6B (294 aa).

A disordered region spans residues 85–120 (VTSLDLGSEEPVQQPRVSKAQKRREKKAAQEKERDD). A compositionally biased stretch (basic and acidic residues) spans 111–120 (KAAQEKERDD). In terms of domain architecture, OTU spans 150 to 287 (LQIRQIPSDG…GEHYNSVEQL (138 aa)). The cys-loop stretch occupies residues 155–161 (IPSDGHC). Aspartate 158 is a catalytic residue. Cysteine 161 (nucleophile) is an active-site residue. The variable-loop stretch occupies residues 222-232 (IVNTPAWGGQL). The tract at residues 270–280 (YMRHAYGLGEH) is his-loop. Residue histidine 280 is part of the active site.

It carries out the reaction Thiol-dependent hydrolysis of ester, thioester, amide, peptide and isopeptide bonds formed by the C-terminal Gly of ubiquitin (a 76-residue protein attached to proteins as an intracellular targeting signal).. In terms of biological role, deubiquitinating enzyme that may play a role in the ubiquitin-dependent regulation of different cellular processes. The sequence is that of Deubiquitinase OTUD6B (otud6b) from Xenopus laevis (African clawed frog).